A 949-amino-acid polypeptide reads, in one-letter code: MKTDAFALRHIGPRETDLQHMLQTIGVDSIEQLVYETLPDDIRLKAPLNLDPAMTEYEFANHIQELGKKNKVFKSYIGLGYHPTIVPAPIQRNIFENPGWYTAYTPYQAEIAQGRLEAILNFQTTVIELTGMEIANASLLDEGTAAAEAMALLFDVRTRDQKKNNTHKFFVSEEILPQTLSVLQTRSTPIGIELVVGNHETFDFSTEFFGAILQYPGKYGQVNDYGAFVAKAKENEIKVAFAADILSLAALTSPGEMGAAVVVGTTQRFGVPMGYGGPHAAYFATKDEYKRSMPGRIIGVSVDANGNRALRMALGTREQHIKREKATSNICTAQVLLAVMAGMYAVYHGPKGLKYIANKVHASAVTTAEALNKLGVFQTNTAFFDTILVKADAQKVKAIAEKNEVNFFYPDAESVSISLNETTSVSDINQIIAIFAEALGKEAVTVSELTTASQLPASLERTSSFLTHDVFNNHHSESQLMRYIKKLERKDLSLNHSMISLGSCTMKLNAASEMLPLSMPNWNSIHPFAPVEQAEGYITMLKKLEQQLNVITGFAGTTLQPNSGAQGEYAGLMAIRAYHLSRNEGHRNVCLIPSSAHGTNPASAAMAGMKIIVTKTTPEGNIDVEDLREKAIEHKDDLSCLMVTYPSTHGVFESSIIEITKLIHENGGLVYMDGANMNAQVGLTNPATIGADVCHLNLHKTFAIPHGGGGPGVGPICVNEKLVPFLPTNPILKVGGEQAITAISSAPYGSALVCLISYGYITMMGAEGLKSATEHAILNANYMKSRFEGHYPILYTGECGRAAHEMILDCRAFKENGIEVGDIAKRLMDYGFHAPTVSFPVAGTLMIEPTESEDLAELDRFCDALISIRKEIEAATADDKNNVLKNAPHTLAMLTSDSWDFPYSREKAAYPLEYIADNKFWPSVRRVDDAYGDRNLVCSCAPIEAYMEN.

The residue at position 700 (lysine 700) is an N6-(pyridoxal phosphate)lysine.

The protein belongs to the GcvP family. As to quaternary structure, the glycine cleavage system is composed of four proteins: P, T, L and H. Pyridoxal 5'-phosphate serves as cofactor.

The enzyme catalyses N(6)-[(R)-lipoyl]-L-lysyl-[glycine-cleavage complex H protein] + glycine + H(+) = N(6)-[(R)-S(8)-aminomethyldihydrolipoyl]-L-lysyl-[glycine-cleavage complex H protein] + CO2. Functionally, the glycine cleavage system catalyzes the degradation of glycine. The P protein binds the alpha-amino group of glycine through its pyridoxal phosphate cofactor; CO(2) is released and the remaining methylamine moiety is then transferred to the lipoamide cofactor of the H protein. The protein is Glycine dehydrogenase (decarboxylating) of Flavobacterium johnsoniae (strain ATCC 17061 / DSM 2064 / JCM 8514 / BCRC 14874 / CCUG 350202 / NBRC 14942 / NCIMB 11054 / UW101) (Cytophaga johnsonae).